Here is a 932-residue protein sequence, read N- to C-terminus: Glycine dehydrogenase (decarboxylating) (932 aa).

The residue at position 685 (lysine 685) is an N6-(pyridoxal phosphate)lysine.

This sequence belongs to the GcvP family. As to quaternary structure, the glycine cleavage system is composed of four proteins: P, T, L and H. The cofactor is pyridoxal 5'-phosphate.

It carries out the reaction N(6)-[(R)-lipoyl]-L-lysyl-[glycine-cleavage complex H protein] + glycine + H(+) = N(6)-[(R)-S(8)-aminomethyldihydrolipoyl]-L-lysyl-[glycine-cleavage complex H protein] + CO2. The glycine cleavage system catalyzes the degradation of glycine. The P protein binds the alpha-amino group of glycine through its pyridoxal phosphate cofactor; CO(2) is released and the remaining methylamine moiety is then transferred to the lipoamide cofactor of the H protein. The polypeptide is Glycine dehydrogenase (decarboxylating) (Brucella suis (strain ATCC 23445 / NCTC 10510)).